We begin with the raw amino-acid sequence, 316 residues long: C-type lectin domain family 10 member A (316 aa).

The Cytoplasmic segment spans residues 1-39 (MTRTYENFQYLENKVKVQGFKNGPLPLQSLLQRLCSGPC). Positions 5–8 (YENF) match the Endocytosis signal motif. Residues 40–60 (HLLLSLGLGLLLLVIICVVGF) form a helical; Signal-anchor for type II membrane protein membrane-spanning segment. Residues 61 to 316 (QNSKFQRDLV…GLGQTSQESH (256 aa)) are Extracellular-facing. N-linked (GlcNAc...) asparagine glycosylation is found at Asn78 and Asn173. A coiled-coil region spans residues 85–176 (AEIQALTSQG…VATLNNNAST (92 aa)). Disulfide bonds link Cys181–Cys192, Cys209–Cys304, and Cys282–Cys296. The region spanning 188 to 305 (HQDSCYWFSH…CQRPYHWVCE (118 aa)) is the C-type lectin domain. Residues Val218, Asn220, Glu224, and Asp243 each contribute to the Ca(2+) site. 2 residues coordinate a glycoprotein: Gln267 and Asp269. Ca(2+)-binding residues include Asp269, Asp270, Glu280, and Asp281. Glu280 serves as a coordination point for a glycoprotein. Residues His286 and Asn292 each contribute to the a glycoprotein site. Positions 292, 293, and 305 each coordinate Ca(2+).

Interacts with A-, B- and C-domain containing PTPRC/CD45 isoforms: isoform 1/CD45ABC, isoform 3/CD45AB, isoform 5/CD45BC and isoform 7/CD45B. Does not interact with PTPRC/CD45 isoform 2/CD45RO, a memory T cell marker. Expressed in myeloid antigen presenting cells in lymph nodes and skin (at protein level). Expressed in dermal dendritic cells (at protein level).

The protein localises to the cell membrane. It is found in the early endosome membrane. Its subcellular location is the lysosome membrane. Its function is as follows. C-type lectin receptor involved in recognition of N-acetylgalactosamine (GalNAc)-terminated glycans by myeloid antigen presenting cells (APCs). Binds in a Ca(2+)-dependent manner to alpha- and beta-linked GalNAc residues on glycoprotein and glycolipid antigens, including alphaGalNAc- and Galbeta1-&gt;3GalNAc-O-Ser/Thr also known as Tn and T antigens, LacdiNAc epitope GalNAcbeta1-&gt;4GlcNAc and its derivative GalNAcbeta1-&gt;4-(Fucalpha1-&gt;3)GlcNAc, O-linked core 5 and 6 glycans, and GM2 and GD2 gangliosides. Acts as a signaling receptor at the interface of APC-T cell interactions. On immature dendritic cells, recognizes Tn antigen-carrying PTPRC/CD45 receptor on effector T cells and downregulates PTRPN/CD45 phosphatase activity with an impact on T cell activation threshold, cytokine production and proliferation. Modulates dendritic cell maturation toward a tolerogenic phenotype leading to generation of regulatory CD4-positive T cell subset with immune suppressive functions. Acts as an endocytic pattern recognition receptor involved in antitumor immunity. During tumorigenesis, recognizes Tn antigens and its sialylated forms Neu5Ac-Tn and Neu5Gc-Tn expressed on tumor cell mucins. On immature dendritic cells, can internalize Tn-terminated immunogens and target them to endolysosomal compartment for MHC class I and II antigen presentation to CD8-positive and CD4-positive T cells, respectively. The sequence is that of C-type lectin domain family 10 member A from Homo sapiens (Human).